The primary structure comprises 174 residues: C-type lectin domain family 2 member A (174 aa).

The Cytoplasmic segment spans residues 1 to 27; that stretch reads MINPELRDGRADGFIHRIVPKLIQNWK. The helical; Signal-anchor for type II membrane protein transmembrane segment at 28–48 threads the bilayer; sequence IGLMCFLSIIITTVCIIMIAT. Residues 49-174 lie on the Extracellular side of the membrane; sequence WSKHAKPVAC…WICSKPKYFL (126 aa). An intrachain disulfide couples C58 to C69. A C-type lectin domain is found at 65 to 174; that stretch reads VRDKCFYFSD…WICSKPKYFL (110 aa). Residues N78, N130, and N143 are each glycosylated (N-linked (GlcNAc...) asparagine). C86 and C167 form a disulfide bridge.

In terms of assembly, homodimer; non-disulfide-linked. Interacts with KLRB1. Interacts with KLRF2. Post-translationally, N-glycosylated. Mainly expressed in skin. Also expressed in keratinocytes, spleen, thymus, small intestine, peripheral blood monocytes, bone marrow, ovary, testis and skin. High expression in CD8(+), B-lymphocytes and naive CD4(+) T-cells. Restricted mostly to proliferating lymphocytes. Not detected in myeloid leukocytes or natural killer (NK) cells.

The protein localises to the cell membrane. Membrane-bound protein expressed mainly on keratinocytes which acts as a ligand to stimulate the activating receptor NKp65/KLRF2, expressed on the surface of natural killer (NK) cells. Facilitates thereby dedicated immune recognition of keratinocytes leading to natural killer cell mediated cytotoxicity. Also plays a role in modulating the extent of T-cell expansion. The chain is C-type lectin domain family 2 member A (CLEC2A) from Homo sapiens (Human).